Here is a 1005-residue protein sequence, read N- to C-terminus: Beta/gamma crystallin domain-containing protein 3 (1005 aa).

5 positions are modified to phosphoserine: serine 122, serine 129, serine 130, serine 136, and serine 140. Disordered regions lie at residues 132–159 (EDVLSSEVSPGHHGSSKSRESANQPSSV) and 173–198 (NFDGDDRQEAEEEEEEAVASGKDWRT). The segment covering 180 to 189 (QEAEEEEEEA) has biased composition (acidic residues). Beta/gamma crystallin 'Greek key' domains are found at residues 367 to 416 (GCWI…KRVL), 462 to 500 (GVWLAYPDIHFKGQATILEEDQGLFEISAAEMKSLHPLQ), 512 to 556 (LKVI…RVIG), 557 to 599 (GVWV…RYLQ), 605 to 647 (SSIT…HVKS), 648 to 690 (GVWV…RPIQ), 701 to 737 (HLLKAFSKAGFQGECIDFVKECADLTSFTPASFKVLR), 738 to 781 (GCWL…QPID), and 828 to 869 (GLWI…RPMK). The Ricin B-type lectin domain maps to 871–1003 (PAVYIRIRNR…GEETQKWDIE (133 aa)).

This sequence belongs to the beta/gamma-crystallin family.

The sequence is that of Beta/gamma crystallin domain-containing protein 3 (Crybg3) from Mus musculus (Mouse).